The following is a 465-amino-acid chain: Chromosomal replication initiator protein DnaA (465 aa).

The domain I, interacts with DnaA modulators stretch occupies residues 1-80 (MLWTDCLTRL…VEILVDSRPG (80 aa)). A domain II region spans residues 80-127 (GAILSPAEQPATTTAALSSTPVVPQRVKKEVVEPAATQSNKILNSKKR). The domain III, AAA+ region stretch occupies residues 128–345 (LLNPLFTFSL…GALNKVVAIA (218 aa)). Residues Gly-173, Gly-175, Lys-176, and Thr-177 each contribute to the ATP site. The interval 346-465 (RFKGSQIDLD…YKNLLRLLQS (120 aa)) is domain IV, binds dsDNA.

The protein belongs to the DnaA family. As to quaternary structure, oligomerizes as a right-handed, spiral filament on DNA at oriC.

The protein localises to the cytoplasm. Plays an essential role in the initiation and regulation of chromosomal replication. ATP-DnaA binds to the origin of replication (oriC) to initiate formation of the DNA replication initiation complex once per cell cycle. Binds the DnaA box (a 9 base pair repeat at the origin) and separates the double-stranded (ds)DNA. Forms a right-handed helical filament on oriC DNA; dsDNA binds to the exterior of the filament while single-stranded (ss)DNA is stabiized in the filament's interior. The ATP-DnaA-oriC complex binds and stabilizes one strand of the AT-rich DNA unwinding element (DUE), permitting loading of DNA polymerase. After initiation quickly degrades to an ADP-DnaA complex that is not apt for DNA replication. Binds acidic phospholipids. The polypeptide is Chromosomal replication initiator protein DnaA (Acinetobacter baylyi (strain ATCC 33305 / BD413 / ADP1)).